We begin with the raw amino-acid sequence, 656 residues long: Protein sly1 homolog (656 aa).

4 tandem repeats follow at residues 85 to 121, 203 to 245, 419 to 456, and 460 to 496. The interval 85–496 is 4 X approximate repeats; it reads DENLDRIQQD…QATQYEGGGT (412 aa).

The protein belongs to the STXBP/unc-18/SEC1 family.

Its subcellular location is the cytoplasm. It localises to the membrane. Functionally, non-vital for development. In Drosophila virilis (Fruit fly), this protein is Protein sly1 homolog (Slh).